The chain runs to 914 residues: Protein translocase subunit SecA (914 aa).

ATP is bound by residues Gln87, 105 to 109 (GEGKT), and Asp508. 4 residues coordinate Zn(2+): Cys898, Cys900, Cys909, and His910.

The protein belongs to the SecA family. As to quaternary structure, monomer and homodimer. Part of the essential Sec protein translocation apparatus which comprises SecA, SecYEG and auxiliary proteins SecDF-YajC and YidC. Zn(2+) is required as a cofactor.

It localises to the cell inner membrane. The protein localises to the cytoplasm. It carries out the reaction ATP + H2O + cellular proteinSide 1 = ADP + phosphate + cellular proteinSide 2.. In terms of biological role, part of the Sec protein translocase complex. Interacts with the SecYEG preprotein conducting channel. Has a central role in coupling the hydrolysis of ATP to the transfer of proteins into and across the cell membrane, serving both as a receptor for the preprotein-SecB complex and as an ATP-driven molecular motor driving the stepwise translocation of polypeptide chains across the membrane. The chain is Protein translocase subunit SecA from Xylella fastidiosa (strain M12).